Reading from the N-terminus, the 49-residue chain is Large ribosomal subunit protein bL33 (49 aa).

It belongs to the bacterial ribosomal protein bL33 family.

In Syntrophomonas wolfei subsp. wolfei (strain DSM 2245B / Goettingen), this protein is Large ribosomal subunit protein bL33.